The sequence spans 168 residues: DAZ-associated protein 2 (168 aa).

Positions 1-13 (MNSKGQYPTQPTY) are enriched in low complexity. Positions 1–25 (MNSKGQYPTQPTYPVQPPGNPVYPQ) are disordered. Residues 39–42 (PPAY) carry the PPAY motif. Position 77 is a phosphoserine (S77).

In terms of assembly, interacts with SOX6. Interacts with DAZ1 and DAZL. Interacts with IL17RB. May interact with FAM168B. Interacts with INCA1. Interacts with EIF4G1 and EIF4G2. Interacts (via PPAY motif) with NEDD4 (via WW domains). Interacts with transcription factor TCF4; the interaction results in localization of DAZAP2 to the nucleus. Interacts with transcription factors TCF7 and TCF7L1. Interacts with transcription factor LEF1. Interacts with serine/threonine-protein kinase HIPK2; the interaction results in phosphorylation of DAZAP2 which causes localization of DAZAP2 to the nucleus, reduces interaction of DAZAP2 with HIPK2 and prevents DAZAP2-dependent degradation of HIPK2. Interacts with ubiquitin ligase SIAH1; the interaction is decreased following phosphorylation of DAZAP2 by HIPK2. Interacts with TP53; the interaction is triggered by DNA damage. Post-translationally, ubiquitinated by SMURF2, leading to proteasomal degradation. Ubiquitinated by NEDD4, leading to proteasomal degradation. Following DNA damage, phosphorylated by HIPK2 which promotes DAZAP2 localization to the nucleus, reduces interaction of DAZAP2 with HIPK2 and SIAH1, and prevents DAZAP2-dependent ubiquitination of HIPK2 by E3 ubiquitin-protein ligase SIAH1 and subsequent HIPK2 proteasomal degradation.

It localises to the cytoplasm. Its subcellular location is the nucleus. The protein resides in the nucleus speckle. The protein localises to the nuclear body. It is found in the stress granule. Functionally, in unstressed cells, promotes SIAH1-mediated polyubiquitination and degradation of the serine/threonine-protein kinase HIPK2, probably by acting as a loading factor that potentiates complex formation between HIPK2 and ubiquitin ligase SIAH1. In response to DNA damage, localizes to the nucleus following phosphorylation by HIPK2 and modulates the expression of a subset of TP53/p53 target genes by binding to TP53 at target gene promoters. This limits the expression of a number of cell death-mediating TP53 target genes, reducing DNA damage-induced cell death. Enhances the binding of transcription factor TCF7L2/TCF4, a Wnt signaling pathway effector, to the promoters of target genes. Plays a role in stress granule formation. The sequence is that of DAZ-associated protein 2 from Rattus norvegicus (Rat).